The following is a 376-amino-acid chain: CCA-adding enzyme (376 aa).

The ATP site is built by G23 and R26. The CTP site is built by G23 and R26. Positions 36 and 38 each coordinate Mg(2+). Positions 106, 152, and 155 each coordinate ATP. Residues R106, R152, and R155 each coordinate CTP.

It belongs to the tRNA nucleotidyltransferase/poly(A) polymerase family. Bacterial CCA-adding enzyme type 2 subfamily. It depends on Mg(2+) as a cofactor.

The catalysed reaction is a tRNA precursor + 2 CTP + ATP = a tRNA with a 3' CCA end + 3 diphosphate. It catalyses the reaction a tRNA with a 3' CCA end + 2 CTP + ATP = a tRNA with a 3' CCACCA end + 3 diphosphate. Catalyzes the addition and repair of the essential 3'-terminal CCA sequence in tRNAs without using a nucleic acid template. Adds these three nucleotides in the order of C, C, and A to the tRNA nucleotide-73, using CTP and ATP as substrates and producing inorganic pyrophosphate. tRNA 3'-terminal CCA addition is required both for tRNA processing and repair. Also involved in tRNA surveillance by mediating tandem CCA addition to generate a CCACCA at the 3' terminus of unstable tRNAs. While stable tRNAs receive only 3'-terminal CCA, unstable tRNAs are marked with CCACCA and rapidly degraded. This is CCA-adding enzyme from Coxiella burnetii (strain RSA 331 / Henzerling II).